The sequence spans 326 residues: MKTTILGAGSFGTAIAFALSSNSTSVNLWGRNHTDMQSIAINRKNLKYLPTCKLPENIIVSSNIDEVLSDYSTCIILAVPTQQLRTLCLSIQDKQHIFEKTPLLICSKGIENISLKFPSEIVKEILPNNPAFILSGPSFAKEIAEDLPCTIVLAGENESLGTSIAQKISNKTFKIIYSQDILGVQIGAALKNIIAIACGIVTGKNLGNNAIATVITKGMEEIKTLYAAKNQNINLSTLIGPSCLGDLILTCTTAHSRNMSFGITIGQGADINKMLNNNSKIIEGVSTVKPLISLAKELNIELPICTSIYNLLYKNIPLEKTISDIL.

NADPH is bound by residues S10, F11, R31, and K108. Residues K108, G136, and S138 each contribute to the sn-glycerol 3-phosphate site. A140 serves as a coordination point for NADPH. Sn-glycerol 3-phosphate-binding residues include K191, D246, S256, R257, and N258. Catalysis depends on K191, which acts as the Proton acceptor. R257 is an NADPH binding site. NADPH contacts are provided by I281 and E283.

This sequence belongs to the NAD-dependent glycerol-3-phosphate dehydrogenase family.

The protein resides in the cytoplasm. The enzyme catalyses sn-glycerol 3-phosphate + NAD(+) = dihydroxyacetone phosphate + NADH + H(+). It carries out the reaction sn-glycerol 3-phosphate + NADP(+) = dihydroxyacetone phosphate + NADPH + H(+). It functions in the pathway membrane lipid metabolism; glycerophospholipid metabolism. Functionally, catalyzes the reduction of the glycolytic intermediate dihydroxyacetone phosphate (DHAP) to sn-glycerol 3-phosphate (G3P), the key precursor for phospholipid synthesis. The chain is Glycerol-3-phosphate dehydrogenase [NAD(P)+] from Ehrlichia chaffeensis (strain ATCC CRL-10679 / Arkansas).